The chain runs to 1019 residues: Type VI secretion system spike protein VgrG2b (1019 aa).

The tract at residues 268 to 291 is disordered; it reads AGRPFTESRLRGHRRDARVASVSG. His935 is a Zn(2+) binding site. Residue Glu936 is part of the active site. Residues His939 and Glu983 each coordinate Zn(2+).

Belongs to the VgrG protein family. As to quaternary structure, interacts with Tla3; this interaction promotes Tle3 loading onto VgrG2b. Interacts with host gamma-tubulin ring complex components GCP1 and GCP4. It depends on Zn(2+) as a cofactor.

Its subcellular location is the secreted. Its function is as follows. Part of the H2 type VI secretion system (H2-T6SS) specialized secretion system, which delivers several virulence factors in both prokaryotic and eukaryotic cells during infection. Forms the spike at the tip of the elongating tube probably formed by haemolysin co-regulated protein 2b/Hcp2b. Allows the delivery of the Tle3 antibacterial toxin to target cells where it exerts its toxicity. Additionally, acts directly as an effector and promotes internalization by interacting with the host gamma-tubulin ring complex. Elicits toxicity also in the bacterial periplasm and disrupts bacterial cell morphology. Toxicity is counteracted by a cognate immunity protein. This is Type VI secretion system spike protein VgrG2b (vgrG2b) from Pseudomonas aeruginosa (strain ATCC 15692 / DSM 22644 / CIP 104116 / JCM 14847 / LMG 12228 / 1C / PRS 101 / PAO1).